We begin with the raw amino-acid sequence, 90 residues long: NAD(P)H-quinone oxidoreductase subunit H, chloroplastic (90 aa).

The protein belongs to the complex I 49 kDa subunit family. In terms of assembly, NDH is composed of at least 16 different subunits, 5 of which are encoded in the nucleus.

The protein resides in the plastid. It localises to the chloroplast thylakoid membrane. It carries out the reaction a plastoquinone + NADH + (n+1) H(+)(in) = a plastoquinol + NAD(+) + n H(+)(out). The enzyme catalyses a plastoquinone + NADPH + (n+1) H(+)(in) = a plastoquinol + NADP(+) + n H(+)(out). NDH shuttles electrons from NAD(P)H:plastoquinone, via FMN and iron-sulfur (Fe-S) centers, to quinones in the photosynthetic chain and possibly in a chloroplast respiratory chain. The immediate electron acceptor for the enzyme in this species is believed to be plastoquinone. Couples the redox reaction to proton translocation, and thus conserves the redox energy in a proton gradient. The polypeptide is NAD(P)H-quinone oxidoreductase subunit H, chloroplastic (ndhH) (Secale cereale (Rye)).